Consider the following 233-residue polypeptide: Archaetidylserine synthase (233 aa).

8 consecutive transmembrane segments (helical) span residues 7–27 (ITSF…SGYL), 29–49 (ILLS…LAVL), 75–95 (SLSD…SAAV), 102–122 (ILVG…FNVL), 126–146 (GKNF…SFYL), 147–167 (TGFY…VLMI), 180–200 (ASTA…VEIL), and 206–226 (VAGP…AVPI).

It belongs to the CDP-alcohol phosphatidyltransferase class-I family.

The protein resides in the membrane. The enzyme catalyses CDP-2,3-bis-O-(geranylgeranyl)-sn-glycerol + L-serine = archaetidylserine + CMP + H(+). It catalyses the reaction CDP-2,3-bis-O-(phytanyl)-sn-glycerol + L-serine = 2,3-bis-O-phytanyl-sn-glycero-3-phospho-L-serine + CMP + H(+). The protein operates within membrane lipid metabolism; glycerophospholipid metabolism. Its activity is regulated as follows. Activated by Mn(2+) ions. Its function is as follows. Involved in the lipid biosynthesis. Catalyzes the formation of unsaturated archaetidylserine from CDP-unsaturated archaeol and L-serine. Activity with ester-linked substrate analogs containing straight aliphatic chains (typical bacterial substrates) is two to three times higher than that with the corresponding ether-type substrate (typical archaeal substrates). Both enantiomers of CDP-unsaturated archaeols with ether-linked geranylgeranyl chains and CDP-saturated archaeol with ether-linked phytanyl chains are similarly active. The enzyme also accepts D-serine, although activity is only about third of that with L-serine. This chain is Archaetidylserine synthase, found in Methanothermobacter thermautotrophicus (strain ATCC 29096 / DSM 1053 / JCM 10044 / NBRC 100330 / Delta H) (Methanobacterium thermoautotrophicum).